A 106-amino-acid polypeptide reads, in one-letter code: UPF0449 protein C19orf25 homolog (106 aa).

This sequence belongs to the UPF0449 family.

The polypeptide is UPF0449 protein C19orf25 homolog (Xenopus tropicalis (Western clawed frog)).